The primary structure comprises 640 residues: Spindle assembly abnormal protein 6 homolog (640 aa).

The PISA domain maps to 40–92; sequence VHKKDLAVRLTDDADPFFLYNLVISEEDFQSLKSQQGLLVDFSAFPQKFIDLL. The stretch at 154-475 forms a coiled coil; it reads LARCLKCLKE…KQLLKTNENV (322 aa).

As to quaternary structure, nine homodimers form a cartwheel structure with an internal diameter of 23 nM and radial spokes connecting to the microtubule triplets.

Its subcellular location is the cytoplasm. The protein resides in the cytoskeleton. The protein localises to the microtubule organizing center. It localises to the centrosome. Central scaffolding component of the centrioles ensuring their 9-fold symmetry. Required for centrosome biogenesis and duplication: required both for mother-centriole-dependent centriole duplication and deuterosome-dependent centriole amplification in multiciliated cells. This chain is Spindle assembly abnormal protein 6 homolog (SASS6), found in Gallus gallus (Chicken).